A 588-amino-acid polypeptide reads, in one-letter code: L-fucose isomerase (588 aa).

Active-site proton acceptor residues include Glu-335 and Asp-359. The Mn(2+) site is built by Glu-335, Asp-359, and His-525.

It belongs to the L-fucose isomerase family. The cofactor is Mn(2+).

It is found in the cytoplasm. The catalysed reaction is L-fucose = L-fuculose. It participates in carbohydrate degradation; L-fucose degradation; L-lactaldehyde and glycerone phosphate from L-fucose: step 1/3. Functionally, converts the aldose L-fucose into the corresponding ketose L-fuculose. The protein is L-fucose isomerase of Streptococcus pneumoniae serotype 4 (strain ATCC BAA-334 / TIGR4).